A 1241-amino-acid chain; its full sequence is Interphotoreceptor matrix proteoglycan 2 (1241 aa).

Residues 1–28 (MIMFLPLGRISLGILILFLTGGNLVSVS) form the signal peptide. Residues 29-1104 (EEIQDRMHAV…CEEFVSEPFV (1076 aa)) are Extracellular-facing. An O-linked (GalNAc...) threonine glycan is attached at threonine 193. Residues 206 to 234 (AASERSAASPQESISNEIENVTEQPTPPA) form a disordered region. Residues 211-229 (SAASPQESISNEIENVTEQ) are compositionally biased toward polar residues. Asparagine 225 carries an N-linked (GlcNAc...) asparagine glycan. Threonine 231 carries an O-linked (GalNAc...) threonine glycan. The SEA 1 domain maps to 235–349 (AEQIAEFSIQ…KPTAVYTISN (115 aa)). The tract at residues 255–263 (RDPSSALYR) is hyaluronan-binding motif involved in chondroitin sulfate A-binding. Residues asparagine 297, asparagine 316, and asparagine 366 are each glycosylated (N-linked (GlcNAc...) asparagine). Threonine 429, threonine 430, and threonine 431 each carry an O-linked (GalNAc...) threonine glycan. Residues 431–443 (TISPFGFSSGPPS) show a composition bias toward low complexity. Disordered stretches follow at residues 431 to 456 (TISP…STLG) and 500 to 520 (VAPE…TEES). O-linked (GalNAc...) threonine glycosylation is present at threonine 817. N-linked (GlcNAc...) asparagine glycans are attached at residues asparagine 841, asparagine 945, and asparagine 959. The SEA 2 domain occupies 900–1013 (GALVVFFSLR…YSLDVESGDD (114 aa)). EGF-like domains follow at residues 1013 to 1054 (DANP…LPCQ) and 1055 to 1096 (SVCD…QHCE). Cystine bridges form between cysteine 1017-cysteine 1028, cysteine 1022-cysteine 1039, cysteine 1041-cysteine 1053, cysteine 1057-cysteine 1070, cysteine 1064-cysteine 1080, and cysteine 1082-cysteine 1095. The interval 1083-1091 (RVGSNWWYR) is hyaluronan-binding motif involved in chondroitin sulfate C-binding. A helical membrane pass occupies residues 1105-1125 (IGITIASVVSLLLVASAVVFF). At 1126–1241 (LAKMLQAQNV…FVREHEMEEL (116 aa)) the chain is on the cytoplasmic side. A hyaluronan-binding motif involved in chondroitin sulfate A- and C-binding region spans residues 1128 to 1136 (KMLQAQNVR). Residues 1139–1145 (RQRPTNR) form a hyaluronan-binding motif involved in chondroitin sulfate C-binding region. The hyaluronan-binding motif involved in chondroitin sulfate A- and C-binding motif stretch occupies residues 1210 to 1218 (KEEIQERMR).

In terms of tissue distribution, expressed in the pineal gland and the outer layer of the retina.

The protein localises to the photoreceptor outer segment membrane. It is found in the photoreceptor inner segment membrane. Its subcellular location is the secreted. The protein resides in the extracellular space. It localises to the extracellular matrix. The protein localises to the interphotoreceptor matrix. Functionally, chondroitin sulfate- and hyaluronan-binding proteoglycan involved in the organization of interphotoreceptor matrix; may participate in the maturation and maintenance of the light-sensitive photoreceptor outer segment. Binds heparin. The sequence is that of Interphotoreceptor matrix proteoglycan 2 (Impg2) from Rattus norvegicus (Rat).